Here is a 201-residue protein sequence, read N- to C-terminus: LexA repressor (201 aa).

The H-T-H motif DNA-binding region spans 29 to 49; that stretch reads VREICKAVGLSSTSSVHFHLK. Residues serine 125 and lysine 162 each act as for autocatalytic cleavage activity in the active site.

Belongs to the peptidase S24 family. As to quaternary structure, homodimer.

It catalyses the reaction Hydrolysis of Ala-|-Gly bond in repressor LexA.. Represses a number of genes involved in the response to DNA damage (SOS response), including recA and lexA. In the presence of single-stranded DNA, RecA interacts with LexA causing an autocatalytic cleavage which disrupts the DNA-binding part of LexA, leading to derepression of the SOS regulon and eventually DNA repair. The polypeptide is LexA repressor (Clostridium botulinum (strain ATCC 19397 / Type A)).